We begin with the raw amino-acid sequence, 405 residues long: POC1 centriolar protein homolog A (405 aa).

WD repeat units lie at residues 17 to 56, 59 to 98, 101 to 140, 143 to 182, 185 to 224, 227 to 266, and 269 to 308; these read GHRDAVTCVDFSLNTKHLASGSMDSTLMIWHMKPQSRAYR, GHKDAVTCVNFSPSGHLLASGSRDKTVRIWVPNVKGESTV, AHTATVRSVHFCSDGQSLVTASDDKTVKVWSTHRQRFLFS, QHINWVRCAKFSPDGRLIVSASDDKTVKLWDKTSRECIHS, EHGGFVTYVDFHPSGTCIAAAGMDNTVKVWDARTHRLLQH, LHSAAVNALSFHPSGNYLITASSDSTLKILDLMEGRLLYT, and GHQGPATTVAFSRTGEYFASGGSDEQVMVWKSNFDIVDYG. Residues 313–352 are disordered; that stretch reads RRPPPLTSSSGTLPKMDLPVPPGRDRSLESVQGEPQESIS. Residues 341–352 show a composition bias toward polar residues; it reads ESVQGEPQESIS. A coiled-coil region spans residues 367–395; the sequence is QLDILTQTVSILEQRLTLTEDRLKQCLEN.

This sequence belongs to the WD repeat POC1 family. Interacts with POC1B. In terms of tissue distribution, widely expressed in embryonic and adult tissues.

The protein localises to the cytoplasm. It is found in the cytoskeleton. Its subcellular location is the microtubule organizing center. It localises to the centrosome. The protein resides in the centriole. The protein localises to the cilium basal body. It is found in the spindle pole. Plays an important role in centriole assembly and/or stability and ciliogenesis. Involved in early steps of centriole duplication, as well as in the later steps of centriole length control. Acts in concert with POC1B to ensure centriole integrity and proper mitotic spindle formation. In Mus musculus (Mouse), this protein is POC1 centriolar protein homolog A (Poc1a).